Consider the following 443-residue polypeptide: UPF0597 protein Dvul_2496 (443 aa).

The tract at residues glycine 156 to serine 178 is disordered.

It belongs to the UPF0597 family.

The sequence is that of UPF0597 protein Dvul_2496 from Nitratidesulfovibrio vulgaris (strain DP4) (Desulfovibrio vulgaris).